A 133-amino-acid chain; its full sequence is Large ribosomal subunit protein bL17 (133 aa).

Belongs to the bacterial ribosomal protein bL17 family. Part of the 50S ribosomal subunit. Contacts protein L32.

This is Large ribosomal subunit protein bL17 from Nitratidesulfovibrio vulgaris (strain ATCC 29579 / DSM 644 / CCUG 34227 / NCIMB 8303 / VKM B-1760 / Hildenborough) (Desulfovibrio vulgaris).